A 376-amino-acid polypeptide reads, in one-letter code: Probable ureide permease A3 (376 aa).

Residues 1 to 9 (HLVESKGGA) lie on the Extracellular side of the membrane. The helical transmembrane segment at 10 to 30 (IACMFLALFFLGTWPALLTML) threads the bilayer. Residues 31 to 41 (ERRGRLPQHTY) lie on the Cytoplasmic side of the membrane. The helical transmembrane segment at 42–62 (LDYSITNFFAALLIAFTFGEI) threads the bilayer. The Extracellular portion of the chain corresponds to 63 to 80 (GKGKPDEPNFLAQLAQDN). The helical transmembrane segment at 81-101 (WPSVLFAMGGGVVLSLGNLSS) threads the bilayer. Over 102-103 (QY) the chain is Cytoplasmic. The chain crosses the membrane as a helical span at residues 104–124 (AFAFVGLSVTEVITASITVVI). Residues 125–137 (GTTLNYFLDDKIN) lie on the Extracellular side of the membrane. Residues 138–158 (KAEILFPGVGCFLIAVFLGFC) traverse the membrane as a helical segment. Residues 159 to 231 (RFNSSNASDN…RAIKVFGKST (73 aa)) are Cytoplasmic-facing. 223–230 (AIKVFGKS) provides a ligand contact to ATP. The helical transmembrane segment at 232 to 252 (LIGLALTFSAGLCFSMFSPAF) threads the bilayer. Topologically, residues 253–274 (NLATNDQWHTLPNGIPHLTVYT) are extracellular. Residues 275–295 (AFFYFSISCFVIAIILNITFL) traverse the membrane as a helical segment. Residues 296-317 (YHPVLNLPKSSLKAYLADSDGR) lie on the Cytoplasmic side of the membrane. A helical membrane pass occupies residues 318 to 338 (IWALLAGLLCGFGNSLQFMGG). The Extracellular portion of the chain corresponds to 339-376 (QAAGYQQQSLCRHFLCKHFWGVLLFGEYRRSSRKTYIC).

Belongs to the plant ureide permease (TC 2.A.7.19) family.

The protein localises to the membrane. Functionally, transports a wide spectrum of oxo derivatives of heterocyclic nitrogen compounds. In Vigna unguiculata (Cowpea), this protein is Probable ureide permease A3 (A3).